Here is a 906-residue protein sequence, read N- to C-terminus: Protein translocase subunit SecA (906 aa).

ATP-binding positions include Gln-86, 104–108 (GEGKT), and Asp-499. The Zn(2+) site is built by Cys-890, Cys-892, Cys-901, and His-902.

Belongs to the SecA family. As to quaternary structure, monomer and homodimer. Part of the essential Sec protein translocation apparatus which comprises SecA, SecYEG and auxiliary proteins SecDF-YajC and YidC. Zn(2+) serves as cofactor.

It localises to the cell inner membrane. It is found in the cytoplasm. The catalysed reaction is ATP + H2O + cellular proteinSide 1 = ADP + phosphate + cellular proteinSide 2.. Functionally, part of the Sec protein translocase complex. Interacts with the SecYEG preprotein conducting channel. Has a central role in coupling the hydrolysis of ATP to the transfer of proteins into and across the cell membrane, serving both as a receptor for the preprotein-SecB complex and as an ATP-driven molecular motor driving the stepwise translocation of polypeptide chains across the membrane. This chain is Protein translocase subunit SecA, found in Rickettsia prowazekii (strain Madrid E).